We begin with the raw amino-acid sequence, 121 residues long: uncharacterized protein (121 aa).

This is an uncharacterized protein from Methanocaldococcus jannaschii (strain ATCC 43067 / DSM 2661 / JAL-1 / JCM 10045 / NBRC 100440) (Methanococcus jannaschii).